The primary structure comprises 393 residues: uncharacterized protein (393 aa).

4 residues coordinate [4Fe-4S] cluster: cysteine 9, cysteine 15, cysteine 18, and cysteine 97. Residues glutamine 231, tyrosine 258, glutamate 279, and aspartate 325 each contribute to the S-adenosyl-L-methionine site. Cysteine 352 acts as the Nucleophile in catalysis.

It belongs to the class I-like SAM-binding methyltransferase superfamily. RNA M5U methyltransferase family.

This is an uncharacterized protein from Leptospira interrogans serogroup Icterohaemorrhagiae serovar Lai (strain 56601).